The sequence spans 461 residues: MSQGKVVQIIGAVVDIEFPQDAVPRVYDALRVTEGDLSGLTLEVQQQLGGGVVRGIALGTTDGLKRGLTVENTGNPIMVPVGTKTLGRIMDVLGNPIDEAGPIGEEERMSIHREAPSYEDQSSSVELLETGIKVIDLVCPFAKGGKVGLFGGAGVGKTVNMMELIRNIAIEHSGFSVFAGVGERTREGNDFYHEMNDSNVLDKVSLVYGQMNEPPGNRLRVALTGLTMAEKFRDEGRDVLFFVDNIYRYTLAGTEVSALLGRMPSAVGYQPTLAEEMGVLQERITSTKTGSITSIQAVYVPADDLTDPSPATTFAHLDATVVLSRDIASLGIYPAVDPLDSTSRQLDPLVIGQEHYDVARGVQTVLQRYKELKDIIAILGMDELSEEDKQVVSRARKIQRFLSQPFFVAEVFTGAPGKYVSLKDTISGFKGILDGEYDHLPEQAFYMVGSIEEALEKAKKA.

151–158 (GGAGVGKT) contributes to the ATP binding site.

This sequence belongs to the ATPase alpha/beta chains family. F-type ATPases have 2 components, CF(1) - the catalytic core - and CF(0) - the membrane proton channel. CF(1) has five subunits: alpha(3), beta(3), gamma(1), delta(1), epsilon(1). CF(0) has three main subunits: a(1), b(2) and c(9-12). The alpha and beta chains form an alternating ring which encloses part of the gamma chain. CF(1) is attached to CF(0) by a central stalk formed by the gamma and epsilon chains, while a peripheral stalk is formed by the delta and b chains.

It is found in the cell inner membrane. It catalyses the reaction ATP + H2O + 4 H(+)(in) = ADP + phosphate + 5 H(+)(out). Produces ATP from ADP in the presence of a proton gradient across the membrane. The catalytic sites are hosted primarily by the beta subunits. This Alteromonas mediterranea (strain DSM 17117 / CIP 110805 / LMG 28347 / Deep ecotype) protein is ATP synthase subunit beta.